The primary structure comprises 453 residues: GTPase Der (453 aa).

EngA-type G domains lie at 4–169 and 177–352; these read PIVA…SETP and IKVA…RQFE. GTP contacts are provided by residues 10 to 17, 57 to 61, 120 to 123, 183 to 190, 230 to 234, and 295 to 298; these read GRPNVGKS, DTGGL, NKCE, DTAGI, and NKWD. A KH-like domain is found at 353 to 438; it reads QRVTTSVINE…PIRLLWRGKK (86 aa).

Belongs to the TRAFAC class TrmE-Era-EngA-EngB-Septin-like GTPase superfamily. EngA (Der) GTPase family. In terms of assembly, associates with the 50S ribosomal subunit.

Its function is as follows. GTPase that plays an essential role in the late steps of ribosome biogenesis. The protein is GTPase Der of Acaryochloris marina (strain MBIC 11017).